The chain runs to 178 residues: Translation initiation factor IF-3 (178 aa).

Positions 1-20 (MRRPFRATPVQKDGPRSNRD) are disordered.

The protein belongs to the IF-3 family. In terms of assembly, monomer.

The protein localises to the cytoplasm. IF-3 binds to the 30S ribosomal subunit and shifts the equilibrium between 70S ribosomes and their 50S and 30S subunits in favor of the free subunits, thus enhancing the availability of 30S subunits on which protein synthesis initiation begins. The sequence is that of Translation initiation factor IF-3 from Brucella anthropi (strain ATCC 49188 / DSM 6882 / CCUG 24695 / JCM 21032 / LMG 3331 / NBRC 15819 / NCTC 12168 / Alc 37) (Ochrobactrum anthropi).